We begin with the raw amino-acid sequence, 111 residues long: Cytochrome c (111 aa).

N-acetylalanine is present on Ala1. Positions 22, 25, and 26 each coordinate heme c. The residue at position 80 (Lys80) is an N6,N6,N6-trimethyllysine. A heme c-binding site is contributed by Met88. Lys94 is subject to N6,N6,N6-trimethyllysine.

The protein belongs to the cytochrome c family. In terms of processing, binds 1 heme c group covalently per subunit.

It localises to the mitochondrion intermembrane space. Functionally, electron carrier protein. The oxidized form of the cytochrome c heme group can accept an electron from the heme group of the cytochrome c1 subunit of cytochrome reductase. Cytochrome c then transfers this electron to the cytochrome oxidase complex, the final protein carrier in the mitochondrial electron-transport chain. The polypeptide is Cytochrome c (Brassica napus (Rape)).